A 583-amino-acid chain; its full sequence is Aspartate--tRNA ligase (583 aa).

Glutamate 174 serves as a coordination point for L-aspartate. Residues 198–201 (QITK) form an aspartate region. Arginine 220 provides a ligand contact to L-aspartate. Residues 220–222 (RDE) and glutamine 229 each bind ATP. L-aspartate is bound at residue histidine 443. Residue glutamate 477 participates in ATP binding. Arginine 484 is an L-aspartate binding site. 529-532 (GLDR) lines the ATP pocket.

It belongs to the class-II aminoacyl-tRNA synthetase family. Type 1 subfamily. Homodimer.

It is found in the cytoplasm. It carries out the reaction tRNA(Asp) + L-aspartate + ATP = L-aspartyl-tRNA(Asp) + AMP + diphosphate. Functionally, catalyzes the attachment of L-aspartate to tRNA(Asp) in a two-step reaction: L-aspartate is first activated by ATP to form Asp-AMP and then transferred to the acceptor end of tRNA(Asp). The sequence is that of Aspartate--tRNA ligase from Streptococcus thermophilus (strain ATCC BAA-250 / LMG 18311).